The chain runs to 239 residues: Fibroblast growth factor 3 (239 aa).

A signal peptide spans 1–17 (MGLIWLLLLSLLEPGWP). N65 is a glycosylation site (N-linked (GlcNAc...) asparagine). The segment at 193 to 239 (QLQSGLPRPPGKGVQPRRRRQKQSPDNLEPSHVQASRLGSQLEASAH) is disordered. Residues 225 to 239 (VQASRLGSQLEASAH) are compositionally biased toward polar residues.

It belongs to the heparin-binding growth factors family. Interacts with FGFR1 and FGFR2. Affinity between fibroblast growth factors (FGFs) and their receptors is increased by heparan sulfate glycosaminoglycans that function as coreceptors.

The protein localises to the secreted. Its function is as follows. Plays an important role in the regulation of embryonic development, cell proliferation, and cell differentiation. Required for normal ear development. The protein is Fibroblast growth factor 3 (FGF3) of Homo sapiens (Human).